A 901-amino-acid chain; its full sequence is Protein translocase subunit SecA (901 aa).

ATP contacts are provided by residues Gln-85, 103–107, and Asp-510; that span reads GEGKT. The span at 836–845 shows a compositional bias: basic and acidic residues; the sequence is EEAERARQEM. Residues 836–901 form a disordered region; it reads EEAERARQEM…HCHGSRVARQ (66 aa). The segment covering 849 to 866 has biased composition (polar residues); the sequence is INQNNLPVDENSQTTQNS. Residues Cys-882, Cys-884, Cys-893, and His-894 each coordinate Zn(2+). Residues 888–901 are compositionally biased toward basic residues; sequence KKYKHCHGSRVARQ.

It belongs to the SecA family. As to quaternary structure, monomer and homodimer. Part of the essential Sec protein translocation apparatus which comprises SecA, SecYEG and auxiliary proteins SecDF-YajC and YidC. Requires Zn(2+) as cofactor.

It is found in the cell inner membrane. The protein localises to the cytoplasm. It carries out the reaction ATP + H2O + cellular proteinSide 1 = ADP + phosphate + cellular proteinSide 2.. In terms of biological role, part of the Sec protein translocase complex. Interacts with the SecYEG preprotein conducting channel. Has a central role in coupling the hydrolysis of ATP to the transfer of proteins into and across the cell membrane, serving both as a receptor for the preprotein-SecB complex and as an ATP-driven molecular motor driving the stepwise translocation of polypeptide chains across the membrane. The chain is Protein translocase subunit SecA from Haemophilus influenzae (strain PittEE).